The following is a 452-amino-acid chain: Exodeoxyribonuclease 7 large subunit (452 aa).

The protein belongs to the XseA family. As to quaternary structure, heterooligomer composed of large and small subunits.

It localises to the cytoplasm. It carries out the reaction Exonucleolytic cleavage in either 5'- to 3'- or 3'- to 5'-direction to yield nucleoside 5'-phosphates.. Functionally, bidirectionally degrades single-stranded DNA into large acid-insoluble oligonucleotides, which are then degraded further into small acid-soluble oligonucleotides. The protein is Exodeoxyribonuclease 7 large subunit of Lysinibacillus sphaericus (strain C3-41).